The chain runs to 261 residues: MGAIRGPVRKIDLNCDMGESFGVYRIGADEEIMPLITSANIACGFHGGDPQVMRRTVRLAREHGVAVGAHPGYRDLVGFWRRPVRCSPDEVYADVLYQIGALAAFCRAEGVALRHVKPHGALYNTAAADAAIAGAVARAVADFDRSLMLYAPPGSALEQAGLAAGLRVIREGFADRGYAADGTLLPRTHPGAVLHEPERAAAQARGMVCSGTVTADTGEEVAVPAETLCVHGDHPSVIQVLRRIRSELEAAGVSVGAPGAD.

This sequence belongs to the LamB/PxpA family. As to quaternary structure, forms a complex composed of PxpA, PxpB and PxpC.

It catalyses the reaction 5-oxo-L-proline + ATP + 2 H2O = L-glutamate + ADP + phosphate + H(+). Its function is as follows. Catalyzes the cleavage of 5-oxoproline to form L-glutamate coupled to the hydrolysis of ATP to ADP and inorganic phosphate. This is 5-oxoprolinase subunit A from Symbiobacterium thermophilum (strain DSM 24528 / JCM 14929 / IAM 14863 / T).